Reading from the N-terminus, the 137-residue chain is Large ribosomal subunit protein uL16 (137 aa).

Belongs to the universal ribosomal protein uL16 family. Part of the 50S ribosomal subunit.

Binds 23S rRNA and is also seen to make contacts with the A and possibly P site tRNAs. The protein is Large ribosomal subunit protein uL16 of Aromatoleum aromaticum (strain DSM 19018 / LMG 30748 / EbN1) (Azoarcus sp. (strain EbN1)).